The sequence spans 144 residues: uncharacterized protein (144 aa).

One can recognise an N-acetyltransferase domain in the interval 2–144 (IELDAINPNN…EDSVLLSKKL (143 aa)).

Belongs to the acetyltransferase family.

It is found in the cytoplasm. The protein localises to the nucleus. This is an uncharacterized protein from Schizosaccharomyces pombe (strain 972 / ATCC 24843) (Fission yeast).